The primary structure comprises 67 residues: Conotoxin Cl14c (67 aa).

Residues 1–20 form the signal peptide; that stretch reads MNVTVMFLVLLLLTMPLTDG. A propeptide spanning residues 21 to 48 is cleaved from the precursor; that stretch reads FNIRATNGGELFGPVQRDAGNVLDHGFQ.

The protein belongs to the conotoxin L superfamily. In terms of processing, contains 2 disulfide bonds. In terms of tissue distribution, expressed by the venom duct.

It is found in the secreted. This chain is Conotoxin Cl14c, found in Californiconus californicus (California cone).